We begin with the raw amino-acid sequence, 93 residues long: Small ribosomal subunit protein uS19c (93 aa).

It belongs to the universal ribosomal protein uS19 family.

It localises to the plastid. The protein localises to the chloroplast. Functionally, protein S19 forms a complex with S13 that binds strongly to the 16S ribosomal RNA. The polypeptide is Small ribosomal subunit protein uS19c (Zygnema circumcarinatum (Green alga)).